The primary structure comprises 556 residues: Dihydroxy-acid dehydratase (556 aa).

Cysteine 47 lines the [2Fe-2S] cluster pocket. Aspartate 79 lines the Mg(2+) pocket. Cysteine 120 contacts [2Fe-2S] cluster. The Mg(2+) site is built by aspartate 121 and lysine 122. Position 122 is an N6-carboxylysine (lysine 122). Cysteine 192 lines the [2Fe-2S] cluster pocket. Glutamate 444 lines the Mg(2+) pocket. Catalysis depends on serine 470, which acts as the Proton acceptor.

It belongs to the IlvD/Edd family. In terms of assembly, homodimer. [2Fe-2S] cluster is required as a cofactor. Requires Mg(2+) as cofactor.

The enzyme catalyses (2R)-2,3-dihydroxy-3-methylbutanoate = 3-methyl-2-oxobutanoate + H2O. It catalyses the reaction (2R,3R)-2,3-dihydroxy-3-methylpentanoate = (S)-3-methyl-2-oxopentanoate + H2O. The protein operates within amino-acid biosynthesis; L-isoleucine biosynthesis; L-isoleucine from 2-oxobutanoate: step 3/4. It functions in the pathway amino-acid biosynthesis; L-valine biosynthesis; L-valine from pyruvate: step 3/4. Functions in the biosynthesis of branched-chain amino acids. Catalyzes the dehydration of (2R,3R)-2,3-dihydroxy-3-methylpentanoate (2,3-dihydroxy-3-methylvalerate) into 2-oxo-3-methylpentanoate (2-oxo-3-methylvalerate) and of (2R)-2,3-dihydroxy-3-methylbutanoate (2,3-dihydroxyisovalerate) into 2-oxo-3-methylbutanoate (2-oxoisovalerate), the penultimate precursor to L-isoleucine and L-valine, respectively. The polypeptide is Dihydroxy-acid dehydratase (Prochlorococcus marinus (strain NATL2A)).